The sequence spans 128 residues: Dehydrin Xero 1 (128 aa).

Over residues 1–19 (MESYQNQSGAQQTHQQLDQ) the composition is skewed to polar residues. A disordered region spans residues 1–128 (MESYQNQSGA…IKEKLPGGHH (128 aa)). Low complexity-rich tracts occupy residues 23-41 (PFPA…PAVA) and 48-60 (GMLH…SSSS). Over residues 75–91 (GITEKIKEKLPGHHDSN) the composition is skewed to basic and acidic residues. The span at 92–104 (KTSSLGSTTTAYD) shows a compositional bias: polar residues. A compositionally biased stretch (basic and acidic residues) spans 107–128 (TVHHEKKGMMEKIKEKLPGGHH).

The protein belongs to the plant dehydrin family.

This Arabidopsis thaliana (Mouse-ear cress) protein is Dehydrin Xero 1 (XERO1).